The following is a 663-amino-acid chain: 4-hydroxy-3-methylbut-2-en-1-yl diphosphate synthase (flavodoxin) (663 aa).

Cys-568, Cys-571, Cys-602, and Glu-609 together coordinate [4Fe-4S] cluster.

The protein belongs to the IspG family. Requires [4Fe-4S] cluster as cofactor.

It carries out the reaction (2E)-4-hydroxy-3-methylbut-2-enyl diphosphate + oxidized [flavodoxin] + H2O + 2 H(+) = 2-C-methyl-D-erythritol 2,4-cyclic diphosphate + reduced [flavodoxin]. Its pathway is isoprenoid biosynthesis; isopentenyl diphosphate biosynthesis via DXP pathway; isopentenyl diphosphate from 1-deoxy-D-xylulose 5-phosphate: step 5/6. Converts 2C-methyl-D-erythritol 2,4-cyclodiphosphate (ME-2,4cPP) into 1-hydroxy-2-methyl-2-(E)-butenyl 4-diphosphate. The protein is 4-hydroxy-3-methylbut-2-en-1-yl diphosphate synthase (flavodoxin) of Leptospira borgpetersenii serovar Hardjo-bovis (strain L550).